Reading from the N-terminus, the 476-residue chain is UDP-N-acetylmuramate--L-alanine ligase (476 aa).

An ATP-binding site is contributed by 121-127; the sequence is GAHGKTT.

This sequence belongs to the MurCDEF family.

It localises to the cytoplasm. It carries out the reaction UDP-N-acetyl-alpha-D-muramate + L-alanine + ATP = UDP-N-acetyl-alpha-D-muramoyl-L-alanine + ADP + phosphate + H(+). The protein operates within cell wall biogenesis; peptidoglycan biosynthesis. Cell wall formation. This chain is UDP-N-acetylmuramate--L-alanine ligase, found in Clavibacter sepedonicus (Clavibacter michiganensis subsp. sepedonicus).